The primary structure comprises 295 residues: Protoheme IX farnesyltransferase (295 aa).

The next 9 helical transmembrane spans lie at Val7–Ala27, Val34–Phe54, Leu78–Leu98, Leu106–Met126, Val131–Ala151, Leu161–Phe181, Ile207–Ala227, Gly228–Ser248, and Leu263–Gln283.

This sequence belongs to the UbiA prenyltransferase family. Protoheme IX farnesyltransferase subfamily.

It is found in the cell inner membrane. The catalysed reaction is heme b + (2E,6E)-farnesyl diphosphate + H2O = Fe(II)-heme o + diphosphate. It functions in the pathway porphyrin-containing compound metabolism; heme O biosynthesis; heme O from protoheme: step 1/1. Its function is as follows. Converts heme B (protoheme IX) to heme O by substitution of the vinyl group on carbon 2 of heme B porphyrin ring with a hydroxyethyl farnesyl side group. This chain is Protoheme IX farnesyltransferase, found in Aeromonas salmonicida (strain A449).